The primary structure comprises 586 residues: Anaerobic glycerol-3-phosphate dehydrogenase subunit A1 (586 aa).

6-34 (SVLVIGGGSTGTGIARDLAMRGLDVTLVE) contributes to the FAD binding site. Residues 559–586 (GGAVADGGRERAADRADDDALGGADGDN) form a disordered region. The segment covering 574–586 (ADDDALGGADGDN) has biased composition (acidic residues).

The protein belongs to the FAD-dependent glycerol-3-phosphate dehydrogenase family. In terms of assembly, composed of a catalytic GlpA/B dimer and of membrane bound GlpC. The cofactor is FAD. It depends on FMN as a cofactor.

It is found in the cell membrane. The enzyme catalyses a quinone + sn-glycerol 3-phosphate = dihydroxyacetone phosphate + a quinol. The protein operates within polyol metabolism; glycerol degradation via glycerol kinase pathway; glycerone phosphate from sn-glycerol 3-phosphate (anaerobic route): step 1/1. With respect to regulation, up-regulated by glycerol and no inhibition by glucose. Its function is as follows. Conversion of glycerol 3-phosphate to dihydroxyacetone phosphate. Required for growth on glycerol and for glycerol metabolism. The sequence is that of Anaerobic glycerol-3-phosphate dehydrogenase subunit A1 (gpdA1) from Haloferax volcanii (strain ATCC 29605 / DSM 3757 / JCM 8879 / NBRC 14742 / NCIMB 2012 / VKM B-1768 / DS2) (Halobacterium volcanii).